The primary structure comprises 279 residues: Probable endonuclease 4 (279 aa).

The Zn(2+) site is built by histidine 67, histidine 107, glutamate 144, aspartate 177, histidine 180, histidine 214, aspartate 227, histidine 229, and glutamate 259.

The protein belongs to the AP endonuclease 2 family. Zn(2+) serves as cofactor.

The catalysed reaction is Endonucleolytic cleavage to 5'-phosphooligonucleotide end-products.. Endonuclease IV plays a role in DNA repair. It cleaves phosphodiester bonds at apurinic or apyrimidinic (AP) sites, generating a 3'-hydroxyl group and a 5'-terminal sugar phosphate. The sequence is that of Probable endonuclease 4 from Sulfurihydrogenibium sp. (strain YO3AOP1).